Consider the following 346-residue polypeptide: Thioredoxin domain-containing protein R362 (346 aa).

The 134-residue stretch at 212–345 (LTNLSNTEAN…IVKFIDETMS (134 aa)) folds into the Thioredoxin domain.

The protein resides in the virion. In Acanthamoeba polyphaga (Amoeba), this protein is Thioredoxin domain-containing protein R362.